The primary structure comprises 158 residues: C-type lectin mannose-binding isoform (158 aa).

The N-terminal stretch at 1 to 20 (MGRFLLVTLSMLVVTFSLNE) is a signal peptide. 3 disulfide bridges follow: C26–C37, C54–C154, and C129–C146. Residues 33-155 (KNGFCYKVFN…CEALYHFICQ (123 aa)) form the C-type lectin domain. Positions 119 to 121 (EPN) match the Mannose-binding motif. The N-linked (GlcNAc...) asparagine glycan is linked to N121. E127, N142, and D143 together coordinate Ca(2+).

This sequence belongs to the true venom lectin family. Homodimer; disulfide-linked. In terms of tissue distribution, expressed by the venom gland.

It localises to the secreted. In terms of biological role, mannose-binding lectin that binds to and agglutinates erythrocytes in a calcium-dependent manner. This Notechis scutatus scutatus (Mainland tiger snake) protein is C-type lectin mannose-binding isoform.